Consider the following 598-residue polypeptide: Aspartate--tRNA(Asp/Asn) ligase (598 aa).

Position 177 (glutamate 177) interacts with L-aspartate. The interval 201–204 is aspartate; that stretch reads QLFK. Residue arginine 223 coordinates L-aspartate. ATP-binding positions include 223-225 and glutamine 232; that span reads RDE. Histidine 456 serves as a coordination point for L-aspartate. Residue glutamate 493 coordinates ATP. Arginine 500 lines the L-aspartate pocket. 545–548 contributes to the ATP binding site; that stretch reads GLDR.

The protein belongs to the class-II aminoacyl-tRNA synthetase family. Type 1 subfamily. Homodimer.

Its subcellular location is the cytoplasm. It carries out the reaction tRNA(Asx) + L-aspartate + ATP = L-aspartyl-tRNA(Asx) + AMP + diphosphate. Its function is as follows. Aspartyl-tRNA synthetase with relaxed tRNA specificity since it is able to aspartylate not only its cognate tRNA(Asp) but also tRNA(Asn). Reaction proceeds in two steps: L-aspartate is first activated by ATP to form Asp-AMP and then transferred to the acceptor end of tRNA(Asp/Asn). The protein is Aspartate--tRNA(Asp/Asn) ligase of Prochlorococcus marinus (strain MIT 9301).